A 600-amino-acid polypeptide reads, in one-letter code: DNA polymerase alpha subunit B (600 aa).

Residues 107–165 (ETLLSSYTTPSKGPLKRVSSTPETPLTKRSVAARSPRQLLSPSSFSPSATPSQKYTSRT) form a disordered region. Serine 126 carries the post-translational modification Phosphoserine. Residues threonine 127 and threonine 130 each carry the phosphothreonine modification. The segment covering 139-159 (ARSPRQLLSPSSFSPSATPSQ) has biased composition (low complexity). Residues serine 141, serine 147, serine 152, and serine 154 each carry the phosphoserine modification.

Belongs to the DNA polymerase alpha subunit B family. Component of the alpha DNA polymerase complex (also known as the alpha DNA polymerase-primase complex) consisting of four subunits: the catalytic subunit POLA1, the regulatory subunit POLA2, and the primase complex subunits PRIM1 and PRIM2 respectively. Within the complex, POLA1 directly interacts with PRIM2. Post-translationally, phosphorylated in a cell cycle-dependent manner, in G2/M phase.

The protein localises to the nucleus. Its function is as follows. Accessory subunit of the DNA polymerase alpha complex (also known as the alpha DNA polymerase-primase complex) which plays an essential role in the initiation of DNA synthesis. During the S phase of the cell cycle, the DNA polymerase alpha complex (composed of a catalytic subunit POLA1, an accessory subunit POLA2 and two primase subunits, the catalytic subunit PRIM1 and the regulatory subunit PRIM2) is recruited to DNA at the replicative forks via direct interactions with MCM10 and WDHD1. The primase subunit of the polymerase alpha complex initiates DNA synthesis by oligomerising short RNA primers on both leading and lagging strands. These primers are initially extended by the polymerase alpha catalytic subunit and subsequently transferred to polymerase delta and polymerase epsilon for processive synthesis on the lagging and leading strand, respectively. The chain is DNA polymerase alpha subunit B (Pola2) from Mus musculus (Mouse).